The following is a 407-amino-acid chain: Serine/threonine transporter SstT (407 aa).

9 helical membrane-spanning segments follow: residues 12–32 (GNLIVQICIGIVLGILIGISS), 42–62 (LGILFTSALKAIAPMLVFILI), 81–101 (IIILYIVGTFLASACAVLANF), 141–161 (ALSSGNYLGILTWAIAGGIAL), 179–199 (VLKIVKFIVKLAPFGIFGLVA), 218–238 (ILLVTTMLFVTFVINALIVFF), 245–267 (FPLIFICLRHSAFFAFFTRSSAA), 288–308 (ISIPLGATINMAGAAVTIAIL), and 330–350 (IIATFAACGASGVAGGSLLLI).

This sequence belongs to the dicarboxylate/amino acid:cation symporter (DAACS) (TC 2.A.23) family.

Its subcellular location is the cell inner membrane. The catalysed reaction is L-serine(in) + Na(+)(in) = L-serine(out) + Na(+)(out). The enzyme catalyses L-threonine(in) + Na(+)(in) = L-threonine(out) + Na(+)(out). Involved in the import of serine and threonine into the cell, with the concomitant import of sodium (symport system). The polypeptide is Serine/threonine transporter SstT (Campylobacter jejuni subsp. jejuni serotype O:6 (strain 81116 / NCTC 11828)).